A 566-amino-acid chain; its full sequence is Phenylalanine--tRNA ligase beta subunit (566 aa).

The region spanning 287–362 (YFQEEVEFDV…IGEGLASFYP (76 aa)) is the B5 domain. Positions 340, 346, 349, and 350 each coordinate Mg(2+).

This sequence belongs to the phenylalanyl-tRNA synthetase beta subunit family. Type 2 subfamily. Tetramer of two alpha and two beta subunits. Mg(2+) is required as a cofactor.

It is found in the cytoplasm. The catalysed reaction is tRNA(Phe) + L-phenylalanine + ATP = L-phenylalanyl-tRNA(Phe) + AMP + diphosphate + H(+). This Borrelia garinii subsp. bavariensis (strain ATCC BAA-2496 / DSM 23469 / PBi) (Borreliella bavariensis) protein is Phenylalanine--tRNA ligase beta subunit.